The sequence spans 445 residues: MTTSTQAPSTKAQGEELREQVLAAARRAKQAAAELAVANRDTKDALLHDMADALVRRAPEIIAANDLDVAAGREAGLAEDMIDRLRLDDDRIAGMADGLRTVAGLPDPVGEVLRGQVLPNGLQLQQVRVPLGVVGIVYEGRPNVTVDAAGLTLKAGNAVLLRGSSSAERSNTVLVSILTDVVVEHGLPADSVQLLPCHDRASVRYLITARGLVDVVIPRGGAGLISAVVEQATVPAIETGVGNCHVYVDAKADVDTALRILLNSKARRVSVCNAAENLLVHQDIAAEFLPRALSELHSAGVTVHGDEQVVEAGGPNVVPATAEDWDTEYLSHDIAAAVVESLPAAVEHIRAHGSGHTEAIVTDDVRAARQFSAQVDAAAVMVNASTAFTDGGEFGMGAEIGISTQKLHARGPMGLPELTSTKWLAFGDGHVRGTGASGVNSCPAG.

This sequence belongs to the gamma-glutamyl phosphate reductase family.

It localises to the cytoplasm. It catalyses the reaction L-glutamate 5-semialdehyde + phosphate + NADP(+) = L-glutamyl 5-phosphate + NADPH + H(+). Its pathway is amino-acid biosynthesis; L-proline biosynthesis; L-glutamate 5-semialdehyde from L-glutamate: step 2/2. In terms of biological role, catalyzes the NADPH-dependent reduction of L-glutamate 5-phosphate into L-glutamate 5-semialdehyde and phosphate. The product spontaneously undergoes cyclization to form 1-pyrroline-5-carboxylate. This is Gamma-glutamyl phosphate reductase from Saccharopolyspora erythraea (strain ATCC 11635 / DSM 40517 / JCM 4748 / NBRC 13426 / NCIMB 8594 / NRRL 2338).